A 135-amino-acid chain; its full sequence is Protein PsiE homolog (135 aa).

The next 4 membrane-spanning stretches (helical) occupy residues 13–33 (VLQW…VIFL), 54–74 (YMLV…ALIV), 82–102 (HFPL…LIIV), and 107–127 (PNDT…LYLA).

This sequence belongs to the PsiE family.

It is found in the cell inner membrane. This is Protein PsiE homolog from Edwardsiella ictaluri (strain 93-146).